A 60-amino-acid polypeptide reads, in one-letter code: Ixodegrin-Ip (60 aa).

The signal sequence occupies residues Met-1–Ala-21. A Cell attachment site motif is present at residues Arg-49–Asp-51.

This sequence belongs to the ixodegrin family. Post-translationally, contains 3 disulfide bonds. In terms of tissue distribution, expressed in salivary glands.

It localises to the secreted. In terms of biological role, tick salivary platelet aggregation inhibitor that plays an important part in the anti-hemostatic strategy of ticks. Inhibits platelet aggregation induced by ADP, thrombin and thromboxane A2 (TXA2). Blocks platelet adhesion to soluble collagen (most probably through the binding to alpha-2/beta-1 integrin (ITGA2/ITGB1)) and binds to purified glycoprotein IIb/IIIa (ITGA2B/ITGB3) in a dose-dependent manner. In vivo, reduces thrombus weight effectively in a rat arteriovenous shunt model and inhibits thrombosis in a carrageenan-induced mouse tail thrombosis model. This Ixodes pacificus (Western black-legged tick) protein is Ixodegrin-Ip.